The primary structure comprises 103 residues: MYAIVRAGGRQEKVSVDDVVTIDRVAKEAGDTLNLEPLLVVDNGKVVSDAAELNKYQVTAEVLGEVTGPKIKILKYKSKTGYKRRLGHRQKYTQIRVTGIAAK.

It belongs to the bacterial ribosomal protein bL21 family. As to quaternary structure, part of the 50S ribosomal subunit. Contacts protein L20.

This protein binds to 23S rRNA in the presence of protein L20. This is Large ribosomal subunit protein bL21 from Thermobifida fusca (strain YX).